We begin with the raw amino-acid sequence, 379 residues long: Glucose-1-phosphate adenylyltransferase (379 aa).

Alpha-D-glucose 1-phosphate contacts are provided by residues glycine 164, 179-180, and serine 190; that span reads EK.

The protein belongs to the bacterial/plant glucose-1-phosphate adenylyltransferase family. In terms of assembly, homotetramer.

The enzyme catalyses alpha-D-glucose 1-phosphate + ATP + H(+) = ADP-alpha-D-glucose + diphosphate. Its pathway is glycan biosynthesis; glycogen biosynthesis. Its function is as follows. Involved in the biosynthesis of ADP-glucose, a building block required for the elongation reactions to produce glycogen. Catalyzes the reaction between ATP and alpha-D-glucose 1-phosphate (G1P) to produce pyrophosphate and ADP-Glc. This chain is Glucose-1-phosphate adenylyltransferase, found in Streptococcus agalactiae serotype Ia (strain ATCC 27591 / A909 / CDC SS700).